Reading from the N-terminus, the 270-residue chain is NAD kinase (270 aa).

Residue aspartate 45 is the Proton acceptor of the active site. NAD(+)-binding positions include 45 to 46 (DG), 121 to 122 (NE), arginine 147, aspartate 149, 160 to 165 (TAYNKS), and alanine 184.

Belongs to the NAD kinase family. The cofactor is a divalent metal cation.

It is found in the cytoplasm. It carries out the reaction NAD(+) + ATP = ADP + NADP(+) + H(+). In terms of biological role, involved in the regulation of the intracellular balance of NAD and NADP, and is a key enzyme in the biosynthesis of NADP. Catalyzes specifically the phosphorylation on 2'-hydroxyl of the adenosine moiety of NAD to yield NADP. This chain is NAD kinase, found in Limosilactobacillus reuteri subsp. reuteri (strain JCM 1112) (Lactobacillus reuteri).